The primary structure comprises 569 residues: Carboxylesterase 3 (569 aa).

Residues 1–24 (MRLHRLRARLNAVAFGLLLLLVHG) form the signal peptide. An intrachain disulfide couples cysteine 95 to cysteine 122. Residue asparagine 103 is glycosylated (N-linked (GlcNAc...) asparagine). Serine 227 serves as the catalytic Acyl-ester intermediate. Cysteine 279 and cysteine 290 are oxidised to a cystine. Active-site charge relay system residues include glutamate 345 and histidine 458. Residues 566-569 (QEDL) carry the Prevents secretion from ER motif.

It belongs to the type-B carboxylesterase/lipase family. In terms of processing, N-glycosylated.

The protein resides in the endoplasmic reticulum lumen. The catalysed reaction is a carboxylic ester + H2O = an alcohol + a carboxylate + H(+). In terms of biological role, involved in the detoxification of xenobiotics and in the activation of ester and amide prodrugs. The protein is Carboxylesterase 3 (CES3) of Pongo abelii (Sumatran orangutan).